A 172-amino-acid chain; its full sequence is Stellate orphon protein at 12D (172 aa).

This sequence belongs to the casein kinase 2 subunit beta family. In terms of assembly, interacts in vitro with the casein kinase 2 alpha subunit (CkII-alpha). The relevance of such interaction is however unclear in vivo. Probably not expressed in wild-type flies. In males lacking the Y chromosome, it is testis-specific and constitutes the main component of star-shaped crystals.

In terms of biological role, unknown. In males lacking the Y chromosome, its strong overexpression leads to the appearance of proteinaceous star-shaped crystals in the primary spermatocytes causing meiotic drive, possibly by interfering with normal casein kinase 2 activity. In Drosophila melanogaster (Fruit fly), this protein is Stellate orphon protein at 12D (Ste12DOR).